Consider the following 181-residue polypeptide: Cell division protein ZapC (181 aa).

This sequence belongs to the ZapC family. In terms of assembly, interacts directly with FtsZ.

The protein resides in the cytoplasm. Contributes to the efficiency of the cell division process by stabilizing the polymeric form of the cell division protein FtsZ. Acts by promoting interactions between FtsZ protofilaments and suppressing the GTPase activity of FtsZ. In Shewanella woodyi (strain ATCC 51908 / MS32), this protein is Cell division protein ZapC.